A 151-amino-acid polypeptide reads, in one-letter code: Ribosomal RNA large subunit methyltransferase H (151 aa).

S-adenosyl-L-methionine contacts are provided by residues Gly-100 and 119-124 (LSKMTF).

It belongs to the RNA methyltransferase RlmH family. Homodimer.

The protein localises to the cytoplasm. The enzyme catalyses pseudouridine(1915) in 23S rRNA + S-adenosyl-L-methionine = N(3)-methylpseudouridine(1915) in 23S rRNA + S-adenosyl-L-homocysteine + H(+). Specifically methylates the pseudouridine at position 1915 (m3Psi1915) in 23S rRNA. This chain is Ribosomal RNA large subunit methyltransferase H, found in Thermotoga sp. (strain RQ2).